A 279-amino-acid polypeptide reads, in one-letter code: Stathmin domain-containing protein 1 (279 aa).

Disordered regions lie at residues 1–110 (MGCG…ERPK) and 178–254 (AAEE…VAQM). Gly2 carries N-myristoyl glycine lipidation. The segment covering 22–32 (KGWEEGSKADV) has biased composition (basic and acidic residues). Residues 34–45 (VTSSKENCSPQT) are compositionally biased toward polar residues. One can recognise an SLD domain in the interval 121-248 (QGIIQSRSKV…GEPLKRKKSE (128 aa)). Composition is skewed to basic and acidic residues over residues 178-191 (AAEE…EEIR) and 232-242 (EKSDVQEGEPL).

The protein is Stathmin domain-containing protein 1 (Stmnd1) of Mus musculus (Mouse).